Consider the following 751-residue polypeptide: Amyloid-beta precursor protein (751 aa).

The first 17 residues, 1 to 17 (MLPGLALLLLAAWTARA), serve as a signal peptide directing secretion. Topologically, residues 18 to 682 (LEVPTDGNAG…AEDVGSNKGA (665 aa)) are extracellular. The segment at 28–123 (LLAEPQIAMF…PYRCLVGEFV (96 aa)) is GFLD subdomain. Residues 28 to 189 (LLAEPQIAMF…RGVEFVCCPL (162 aa)) enclose the E1 domain. Cystine bridges form between Cys38-Cys62, Cys73-Cys117, Cys98-Cys105, Cys133-Cys187, Cys144-Cys174, and Cys158-Cys186. A heparin-binding site is contributed by 96 to 110 (NWCKRDRKQCKTHPH). The tract at residues 131-189 (DKCKFLHQERMDVCETHLHWHTVAKETCSEKSTNLHDYGMLLPCGIDKFRGVEFVCCPL) is cuBD subdomain. Positions 147, 151, and 168 each coordinate Cu(2+). Residues 181-188 (GVEFVCCP) form a zinc-binding region. Positions 183, 186, and 187 each coordinate Zn(2+). The tract at residues 195 to 284 (HVDSADAEED…TTTTTTESVE (90 aa)) is disordered. Phosphoserine; by CK1 and CK2 occurs at positions 198 and 206. A sulfotyrosine mark is found at Tyr217 and Tyr262. The span at 228-264 (VAEEEEVAEVEEEEADDDEDDEDGDEVEEEAEEPYEE) shows a compositional bias: acidic residues. Low complexity predominate over residues 268–281 (RTTSIATTTTTTTE). Cystine bridges form between Cys291/Cys341, Cys300/Cys324, and Cys316/Cys337. One can recognise a BPTI/Kunitz inhibitor domain in the interval 291-341 (CSEQAETGPCRAMISRWYFDVTEGKCAPFFYGGCGGNRNNFDTEEYCMAVC). Heparin-binding regions lie at residues 316-344 (CAPF…CGSV) and 363-428 (PGDE…QEAA). Tyr336 carries the sulfotyrosine modification. The short motif at 344–346 (VIP) is the OX-2 element. One can recognise an E2 domain in the interval 355–546 (AVDKYLETPG…EEIQDEVDEL (192 aa)). A Phosphoserine modification is found at Ser422. Tyr478 is subject to Phosphotyrosine. The tract at residues 504-521 (AAQIRSQVMTHLRVIYER) is collagen-binding. Asn523 and Asn552 each carry an N-linked (GlcNAc...) asparagine glycan. His658, Tyr662, His665, and His666 together coordinate Cu(2+). Zn(2+) contacts are provided by His658, Tyr662, His665, and His666. Positions 676-703 (VGSNKGAIIGLMVGGVVIATVIVITLVM) are interaction with PSEN1. A helical membrane pass occupies residues 683–703 (IIGLMVGGVVIATVIVITLVM). Over 704-751 (LKKKQYTSIHHGVVEVDAAVTPEERHLSKMQQNGYENPTYKFFEQMQN) the chain is Cytoplasmic. The Basolateral sorting signal motif lies at 705–715 (KKKQYTSIHHG). A Phosphothreonine modification is found at Thr710. A Phosphoserine; by APP-kinase I modification is found at Ser711. The segment at 713-732 (HHGVVEVDAAVTPEERHLSK) is interaction with G(o)-alpha. Thr724 carries the phosphothreonine; by CDK5 and MAPK10 modification. The segment at 737–751 (GYENPTYKFFEQMQN) is required for the interaction with KIF5B and for anterograde transport in axons. Residue Tyr738 is modified to Phosphotyrosine; by ABL1. The short motif at 738–743 (YENPTY) is the YENPXY motif; contains endocytosis signal element. Lys744 is covalently cross-linked (Glycyl lysine isopeptide (Lys-Gly) (interchain with G-Cter in ubiquitin)).

This sequence belongs to the APP family. Binds, via its C-terminus, to the PID domain of several cytoplasmic proteins, including APBB family members, the APBA family, MAPK8IP1, SHC1 and NUMB and DAB1. Binding to DAB1 inhibits its serine phosphorylation. Interacts (via NPXY motif) with DAB2 (via PID domain); the interaction is impaired by tyrosine phosphorylation of the NPXY motif. Also interacts with GPCR-like protein BPP, APPBP1, IB1, KNS2 (via its TPR domains), APPBP2 (via BaSS) and DDB1. In vitro, it binds MAPT via the MT-binding domains. Associates with microtubules in the presence of ATP and in a kinesin-dependent manner. Interacts, through a C-terminal domain, with GNAO1. Amyloid-beta protein 42 binds CHRNA7 in hippocampal neurons. Amyloid-beta associates with HADH2. Interacts with CPEB1, ANKS1B and AGER. Interacts with ITM2B. Interacts with ITM2C. Interacts with IDE. Can form homodimers; dimerization is enhanced in the presence of Cu(2+) ions. Can form homodimers; this is promoted by heparin binding. Amyloid-beta protein 40 interacts with S100A9. CTF-alpha product of APP interacts with GSAP. Isoform APP695 interacts with SORL1 (via N-terminal ectodomain); this interaction retains APP in the trans-Golgi network and reduces processing into soluble APP-alpha and amyloid-beta peptides. Isoform APP770 interacts with SORL1. The C99 fragment also interacts with SORL1. Interacts with PLD3. Interacts with VDAC1. Interacts with NSG1; could regulate APP processing. Amyloid-beta protein 42 interacts with FPR2. Interacts (via transmembrane region) with PSEN1; the interaction is direct. Interacts with LRRK2. Interacts (via cytoplasmic domain) with KIF5B. Interacts (via C-terminus) with APBB2/FE65L1 (via C-terminus). Interacts (via intracellular domain) with APBB3. Post-translationally, proteolytically processed under normal cellular conditions. Cleavage either by alpha-secretase, beta-secretase or theta-secretase leads to generation and extracellular release of soluble APP peptides, S-APP-alpha and S-APP-beta, and the retention of corresponding membrane-anchored C-terminal fragments, C80, C83 and C99. Subsequent processing of C80 and C83 by gamma-secretase yields P3 peptides. This is the major secretory pathway and is non-amyloidogenic. Alternatively, presenilin/nicastrin-mediated gamma-secretase processing of C99 releases the amyloid-beta proteins, amyloid-beta protein 40 and amyloid-beta protein 42, major components of amyloid plaques, and the cytotoxic C-terminal fragments, gamma-CTF(50), gamma-CTF(57) and gamma-CTF(59). PSEN1 cleavage is more efficient with C83 than with C99 as substrate (in vitro). Amyloid-beta protein 40 and Amyloid-beta protein 42 are cleaved by ACE. Many other minor amyloid-beta peptides, amyloid-beta 1-X peptides, are found in cerebral spinal fluid (CSF) including the amyloid-beta X-15 peptides, produced from the cleavage by alpha-secretase. Proteolytically cleaved by caspases during neuronal apoptosis. Cleavage at Asp-720 by either caspase-3, -8 or -9 results in the production of the neurotoxic C31 peptide and the increased production of amyloid-beta peptides. In terms of processing, N- and O-glycosylated. Post-translationally, phosphorylation in the C-terminal on tyrosine, threonine and serine residues is neuron-specific. Phosphorylation can affect APP processing, neuronal differentiation and interaction with other proteins. Phosphorylated on Thr-724 in neuronal cells by Cdc5 kinase and Mapk10, in dividing cells by Cdc2 kinase in a cell-cycle dependent manner with maximal levels at the G2/M phase and, in vitro, by GSK-3-beta. The Thr-724 phosphorylated form causes a conformational change which reduces binding of Fe65 family members. In dopaminergic (DA) neurons, phosphorylation on Thr-724 by LRKK2 promotes the production and the nuclear translocation of the APP intracellular domain (AICD) which induces DA neuron apoptosis. Phosphorylation on Tyr-738 is required for SHC binding. Phosphorylated in the extracellular domain by casein kinases on both soluble and membrane-bound APP. This phosphorylation is inhibited by heparin. Trophic-factor deprivation triggers the cleavage of surface APP by beta-secretase to release sAPP-beta which is further cleaved to release an N-terminal fragment of APP (N-APP). In terms of processing, amyloid-beta peptides are degraded by IDE. Post-translationally, sulfated on tyrosine residues.

It localises to the cell membrane. It is found in the membrane. Its subcellular location is the perikaryon. The protein resides in the cell projection. The protein localises to the growth cone. It localises to the clathrin-coated pit. It is found in the early endosome. Its subcellular location is the cytoplasmic vesicle. The protein resides in the endoplasmic reticulum. The protein localises to the golgi apparatus. It localises to the secreted. It is found in the cell surface. Its subcellular location is the nucleus. The protein resides in the cytoplasm. Functions as a cell surface receptor and performs physiological functions on the surface of neurons relevant to neurite growth, neuronal adhesion and axonogenesis. Interaction between APP molecules on neighboring cells promotes synaptogenesis. Involved in cell mobility and transcription regulation through protein-protein interactions. Can promote transcription activation through binding to APBB1-KAT5 and inhibit Notch signaling through interaction with Numb. Couples to apoptosis-inducing pathways such as those mediated by G(o) and JIP. Inhibits G(o)-alpha ATPase activity. Acts as a kinesin I membrane receptor, mediating the axonal transport of beta-secretase and presenilin 1. By acting as a kinesin I membrane receptor, plays a role in axonal anterograde transport of cargo towards synapses in axons. May be involved in copper homeostasis/oxidative stress through copper ion reduction. In vitro, copper-metallated APP induces neuronal death directly or is potentiated through Cu(2+)-mediated low-density lipoprotein oxidation. Can regulate neurite outgrowth through binding to components of the extracellular matrix such as heparin and collagen I and IV. Induces a AGER-dependent pathway that involves activation of p38 MAPK, resulting in internalization of amyloid-beta peptide and mitochondrial dysfunction in cultured cortical neurons. Provides Cu(2+) ions for GPC1 which are required for release of nitric oxide (NO) and subsequent degradation of the heparan sulfate chains on GPC1. In terms of biological role, amyloid-beta peptides are lipophilic metal chelators with metal-reducing activity. Binds transient metals such as copper, zinc and iron. Its function is as follows. The gamma-CTF peptides as well as the caspase-cleaved peptides, including C31, are potent enhancers of neuronal apoptosis. This is Amyloid-beta precursor protein from Saimiri sciureus (Common squirrel monkey).